Consider the following 216-residue polypeptide: Small ribosomal subunit protein uS3 (216 aa).

Positions 38 to 106 constitute a KH type-2 domain; sequence LRKMLKDKLY…QANIEIKEVR (69 aa).

Belongs to the universal ribosomal protein uS3 family. As to quaternary structure, part of the 30S ribosomal subunit. Forms a tight complex with proteins S10 and S14.

Functionally, binds the lower part of the 30S subunit head. Binds mRNA in the 70S ribosome, positioning it for translation. The sequence is that of Small ribosomal subunit protein uS3 from Thermodesulfovibrio yellowstonii (strain ATCC 51303 / DSM 11347 / YP87).